We begin with the raw amino-acid sequence, 159 residues long: Phosphopantetheine adenylyltransferase (159 aa).

Thr-9 lines the substrate pocket. Residues 9–10 (TF) and His-17 contribute to the ATP site. Positions 41, 73, and 87 each coordinate substrate. Residues 88–90 (GLR), Glu-98, and 123–129 (YSFISST) contribute to the ATP site.

This sequence belongs to the bacterial CoaD family. As to quaternary structure, homohexamer. Requires Mg(2+) as cofactor.

It localises to the cytoplasm. The enzyme catalyses (R)-4'-phosphopantetheine + ATP + H(+) = 3'-dephospho-CoA + diphosphate. The protein operates within cofactor biosynthesis; coenzyme A biosynthesis; CoA from (R)-pantothenate: step 4/5. Its function is as follows. Reversibly transfers an adenylyl group from ATP to 4'-phosphopantetheine, yielding dephospho-CoA (dPCoA) and pyrophosphate. The chain is Phosphopantetheine adenylyltransferase from Pseudomonas putida (strain ATCC 700007 / DSM 6899 / JCM 31910 / BCRC 17059 / LMG 24140 / F1).